A 221-amino-acid polypeptide reads, in one-letter code: SIN3-HDAC complex-associated factor (221 aa).

Residues 112–121 (QKEFKRHNSD) are compositionally biased toward basic and acidic residues. 2 disordered regions span residues 112–152 (QKEF…MASG) and 201–221 (AAAEKPEEQGPEPLPISTQEW). The span at 124–135 (STTSSASPAQSP) shows a compositional bias: low complexity. Over residues 136-152 (CYSNQSDDGSDTEMASG) the composition is skewed to polar residues.

Belongs to the SINHCAF family. Interacts with the Sin3/HDAC corepressor complex at least composed of BRMS1, BRMS1L, ING2, SAP30, SAP30L and HDAC1. Found in a complex composed of at least SINHCAF, SIN3A, HDAC1, SAP30, RBBP4, OGT and TET1. Interacts with SIN3A and OGT.

The protein resides in the nucleus. Functionally, subunit of the Sin3 deacetylase complex (Sin3/HDAC), this subunit is important for the repression of genes encoding components of the TGF-beta signaling pathway. Core component of a SIN3A complex (composed of at least SINHCAF, SIN3A, HDAC1, SAP30, RBBP4, OGT and TET1) present in embryonic stem (ES) cells. Promotes the stability of SIN3A and its presence on chromatin and is essential for maintaining the potential of ES cells to proliferate rapidly, while ensuring a short G1-phase of the cell cycle, thereby preventing premature lineage priming. In Homo sapiens (Human), this protein is SIN3-HDAC complex-associated factor.